We begin with the raw amino-acid sequence, 297 residues long: Nucleotide-binding protein BTH_I0482 (297 aa).

8–15 (GISGSGKS) provides a ligand contact to ATP. 57-60 (DARS) is a GTP binding site.

The protein belongs to the RapZ-like family.

Functionally, displays ATPase and GTPase activities. This Burkholderia thailandensis (strain ATCC 700388 / DSM 13276 / CCUG 48851 / CIP 106301 / E264) protein is Nucleotide-binding protein BTH_I0482.